We begin with the raw amino-acid sequence, 149 residues long: Large ribosomal subunit protein uL15 (149 aa).

A disordered region spans residues 14–57 (KQRKRVGRGSGSGWGCTSGKGNKGQNARSGGGVRPGFEGGQMPL). 2 stretches are compositionally biased toward gly residues: residues 21–35 (RGSG…GKGN) and 42–52 (SGGGVRPGFEG).

It belongs to the universal ribosomal protein uL15 family. In terms of assembly, part of the 50S ribosomal subunit.

Binds to the 23S rRNA. In Oleidesulfovibrio alaskensis (strain ATCC BAA-1058 / DSM 17464 / G20) (Desulfovibrio alaskensis), this protein is Large ribosomal subunit protein uL15.